The chain runs to 156 residues: Small ribosomal subunit protein uS7 (156 aa).

It belongs to the universal ribosomal protein uS7 family. Part of the 30S ribosomal subunit. Contacts proteins S9 and S11.

Functionally, one of the primary rRNA binding proteins, it binds directly to 16S rRNA where it nucleates assembly of the head domain of the 30S subunit. Is located at the subunit interface close to the decoding center, probably blocks exit of the E-site tRNA. In Bacillus cereus (strain ZK / E33L), this protein is Small ribosomal subunit protein uS7.